A 457-amino-acid polypeptide reads, in one-letter code: Senescence-associated protein OSA15, chloroplastic (457 aa).

The N-terminal 57 residues, Met1–Cys57, are a transit peptide targeting the chloroplast.

This sequence belongs to the ATA15/OSA15 family. Expressed in leaves (at protein level).

The protein localises to the plastid. It localises to the chloroplast. May be involved in the regulation of leaf senescence. This chain is Senescence-associated protein OSA15, chloroplastic, found in Oryza sativa subsp. japonica (Rice).